We begin with the raw amino-acid sequence, 139 residues long: Maximins 4/H3 type 7 (139 aa).

The first 18 residues, 1–18 (MNFKYIVAVSFLIASAYA), serve as a signal peptide directing secretion. A propeptide spanning residues 19–43 (RSVQNDEQSLSQRDVLEEESLREIR) is cleaved from the precursor. Asparagine 70 carries the post-translational modification Asparagine amide. The propeptide occupies 74–118 (TAEDHEVMKRLEAIMRDLDSLDYPEEASERETRGFNQDEIAKEKR). An Isoleucine amide modification is found at isoleucine 138.

The protein belongs to the bombinin family. As to expression, expressed by the skin glands.

Its subcellular location is the secreted. In terms of biological role, maximin-4 shows antibacterial activity against both Gram-positive and Gram-negative bacteria. It also shows antimicrobial activity against the fungus C.albicans, but not against A.flavus nor P.uticale. It has little hemolytic activity. It does not possess a significant cytotoxicity against tumor cell lines. It does not possess a significant anti-HIV activity. Its function is as follows. Maximin-H3 shows antibacterial activity against both Gram-positive and Gram-negative bacteria. It also shows antimicrobial activity against the fungus C.albicans. Shows strong hemolytic activity. This is Maximins 4/H3 type 7 from Bombina maxima (Giant fire-bellied toad).